The sequence spans 112 residues: Nitrogen regulatory protein GlnK2 (112 aa).

ADP contacts are provided by residues threonine 29, 38–39, valine 64, and 87–90; these read QQ and GDGK. Residues threonine 29, 38 to 39, valine 64, 87 to 90, and 101 to 103 each bind ATP; these read QQ, GDGK, and RIR.

This sequence belongs to the P(II) protein family. As to quaternary structure, homotrimer. Interacts and forms a complex with Amt2.

It localises to the cytoplasm. Binding of adenosine nucleotides results in distinct, cooperative behavior for ATP and ADP. GlnK2 is completely insensitive to 2-oxoglutarate at a low level of intracellular nitrogen. Involved in the regulation of nitrogen metabolism. Regulates the activity of its targets by protein-protein interaction in response to the nitrogen status of the cell. Regulates the activity of the ammonia channel Amt2 via direct interaction. The protein is Nitrogen regulatory protein GlnK2 of Archaeoglobus fulgidus (strain ATCC 49558 / DSM 4304 / JCM 9628 / NBRC 100126 / VC-16).